The sequence spans 106 residues: uncharacterized protein (106 aa).

The next 2 helical transmembrane spans lie at 53–70 (LLLL…LDII) and 74–93 (ILGL…WTLI).

The protein localises to the cell membrane. This is an uncharacterized protein from Bacillus subtilis (strain 168).